Here is an 82-residue protein sequence, read N- to C-terminus: Leucinostatins biosynthesis cluster protein M (82 aa).

Residues 34–82 (ARNETHDPSGPRAPVSSMRLGPRSRPYHHGTARLRGSPNCSRDSSSAAT) form a disordered region. Residues 71–82 (PNCSRDSSSAAT) are compositionally biased toward polar residues.

Part of the gene cluster that mediates the biosynthesis of the lipopeptide antibiotics leucinostatins that show extensive biological activities, including antimalarial, antiviral, antibacterial, antifungal, and antitumor activities, as well as phytotoxic. The function of lcsM within the leucinostatins biosynthesis has not been identified yet. The chain is Leucinostatins biosynthesis cluster protein M from Purpureocillium lilacinum (Paecilomyces lilacinus).